The following is a 1705-amino-acid chain: Alpha-protein kinase 3 (1705 aa).

Residues 1–10 (MGSRRAPSRG) are compositionally biased toward low complexity. The disordered stretch occupies residues 1-33 (MGSRRAPSRGWGAGGRSGAGGDGEDDGPVWIPS). The span at 11–21 (WGAGGRSGAGG) shows a compositional bias: gly residues. Residues 77 to 168 (PLFETTLKSR…GIVSCSGVLE (92 aa)) form the Ig-like 1 domain. Basic and acidic residues predominate over residues 211-221 (DTLRKLSPDRF). Disordered regions lie at residues 211 to 244 (DTLR…EPEG), 308 to 749 (LKEE…GPRA), 792 to 845 (GPLS…ERPG), 1082 to 1145 (GLAS…KFPG), and 1173 to 1226 (RAAG…MLEV). Position 228 is a phosphoserine (Ser228). Residues 308-342 (LKEESGAKKKKKDEESKQGLRKPELEKAAQSRRSS) are compositionally biased toward basic and acidic residues. A compositionally biased stretch (low complexity) spans 370–382 (PRGRAARGPGSSG). The segment covering 495–504 (DSKPISSLSQ) has biased composition (polar residues). Low complexity predominate over residues 557 to 579 (TTTAPTMSASSSSDVASIGVSTS). Over residues 598–609 (TSANQRTGSKKN) the composition is skewed to polar residues. The span at 647-657 (ESKRPQSDRSA) shows a compositional bias: basic and acidic residues. Polar residues predominate over residues 666 to 676 (RAETQLETTQA). The span at 679 to 700 (KIQEDRKAQADKGTQEDRRMQG) shows a compositional bias: basic and acidic residues. Over residues 708-729 (KGTQSEGSAPTAMEGQSEQEVA) the composition is skewed to polar residues. Residues 736-745 (SRTPKLPPTA) are compositionally biased toward pro residues. A compositionally biased stretch (basic and acidic residues) spans 829–844 (AKQEDSPFQCPKEERP). Over residues 1120-1131 (GQAAPGQGPSAE) the composition is skewed to low complexity. Ser1222 carries the phosphoserine modification. The 89-residue stretch at 1274-1362 (PQVIRKIRVE…GSASTDFCLS (89 aa)) folds into the Ig-like 2 domain. A disulfide bond links Cys1296 and Cys1346. One can recognise an Alpha-type protein kinase domain in the interval 1390–1625 (KGLADSGCWG…YCELLGLTPL (236 aa)). Residues 1628–1705 (PEAAHPQAKA…EEGSKAQGMR (78 aa)) form a disordered region. Over residues 1664–1696 (PQGTRKSAPSSKATPQASEPVTTQLLGQPPTQE) the composition is skewed to polar residues.

The protein belongs to the protein kinase superfamily. Alpha-type protein kinase family. ALPK subfamily.

The protein localises to the nucleus. The catalysed reaction is L-seryl-[protein] + ATP = O-phospho-L-seryl-[protein] + ADP + H(+). It carries out the reaction L-threonyl-[protein] + ATP = O-phospho-L-threonyl-[protein] + ADP + H(+). Involved in cardiomyocyte differentiation. The polypeptide is Alpha-protein kinase 3 (Homo sapiens (Human)).